The following is a 402-amino-acid chain: Triose phosphate/phosphate translocator, non-green plastid, chloroplastic (402 aa).

Residues 1 to 82 (MQSSAVFSAS…SLDTNRFKTA (82 aa)) constitute a chloroplast transit peptide. The Chloroplast intermembrane portion of the chain corresponds to 83 to 98 (ATAVPEEGEGSGKMTK). The helical transmembrane segment at 99 to 119 (VLELGLLFAMWYLFNIYFNIY) threads the bilayer. The region spanning 118–236 (IYNKQVLKAL…IVGGVALASV (119 aa)) is the EamA domain. Residues 120–131 (NKQVLKALHAPM) are Lumenal-facing. Residues 132–152 (TVTLVQFAVGSVLITFMWALN) traverse the membrane as a helical segment. Topologically, residues 153-209 (LYKRPKISAAQLAAILPLAVVHTLGNLFTNMSLGKVSVSFTHTIKAMEPFFSVVLSA) are chloroplast intermembrane. Residues 210-230 (MFLGEVPTPWVIGSIIPIVGG) traverse the membrane as a helical segment. Residues 231–278 (VALASVTEVSFNWAGFLSAMASNLTNQSRNVLSKKVMVKKDDSLDNIT) are Lumenal-facing. The chain crosses the membrane as a helical span at residues 279–298 (LFSIITLMSLFLMAPVTFFS). Topologically, residues 299-374 (EGIKFTPSYI…IFFKTPVSPV (76 aa)) are chloroplast intermembrane. Residues 375–394 (NAFGTGIALAGVFLYSRVKR) form a helical membrane-spanning segment. Residues 395–402 (IKPKPKTA) are Lumenal-facing.

This sequence belongs to the TPT transporter family. TPT (TC 2.A.7.9) subfamily. As to quaternary structure, homodimer.

The protein resides in the plastid. Its subcellular location is the chloroplast membrane. Mediates the export of fixed carbons from the chloroplasts into the cytosol in the form of triose phosphates. This is Triose phosphate/phosphate translocator, non-green plastid, chloroplastic (NGTPT) from Brassica oleracea var. botrytis (Cauliflower).